Here is a 98-residue protein sequence, read N- to C-terminus: Co-chaperonin GroES (98 aa).

Belongs to the GroES chaperonin family. In terms of assembly, heptamer of 7 subunits arranged in a ring. Interacts with the chaperonin GroEL.

The protein localises to the cytoplasm. Functionally, together with the chaperonin GroEL, plays an essential role in assisting protein folding. The GroEL-GroES system forms a nano-cage that allows encapsulation of the non-native substrate proteins and provides a physical environment optimized to promote and accelerate protein folding. GroES binds to the apical surface of the GroEL ring, thereby capping the opening of the GroEL channel. The polypeptide is Co-chaperonin GroES (Corynebacterium diphtheriae (strain ATCC 700971 / NCTC 13129 / Biotype gravis)).